The primary structure comprises 124 residues: Small ribosomal subunit protein uS13 (124 aa).

Residues Gly-89 to Lys-124 are disordered. Positions Gln-101–Lys-124 are enriched in basic residues.

It belongs to the universal ribosomal protein uS13 family. As to quaternary structure, part of the 30S ribosomal subunit. Forms a loose heterodimer with protein S19. Forms two bridges to the 50S subunit in the 70S ribosome.

Located at the top of the head of the 30S subunit, it contacts several helices of the 16S rRNA. In the 70S ribosome it contacts the 23S rRNA (bridge B1a) and protein L5 of the 50S subunit (bridge B1b), connecting the 2 subunits; these bridges are implicated in subunit movement. Contacts the tRNAs in the A and P-sites. This chain is Small ribosomal subunit protein uS13, found in Nocardioides sp. (strain ATCC BAA-499 / JS614).